A 215-amino-acid chain; its full sequence is Chloramphenicol acetyltransferase (215 aa).

The active-site Proton acceptor is the His-189.

This sequence belongs to the chloramphenicol acetyltransferase family. As to quaternary structure, homotrimer.

The enzyme catalyses chloramphenicol + acetyl-CoA = chloramphenicol 3-acetate + CoA. Functionally, this enzyme is an effector of chloramphenicol resistance in bacteria. The sequence is that of Chloramphenicol acetyltransferase (cat) from Staphylococcus aureus.